A 168-amino-acid polypeptide reads, in one-letter code: Monothiol glutaredoxin-S7, chloroplastic (168 aa).

The transit peptide at 1–54 (MAATAAASVAAISPLPGASLPRPVSARVPLLPRASPPTWRLSVGSARARSTRCL) directs the protein to the chloroplast. The Glutaredoxin domain maps to 67–168 (RATLDKVVGS…QETLEKAMLS (102 aa)). Residue Lys-84 coordinates glutathione. Cys-92 contributes to the [2Fe-2S] cluster binding site. Glutathione contacts are provided by residues Arg-121, Phe-133, and 146 to 147 (CD).

This sequence belongs to the glutaredoxin family. CGFS subfamily.

Its subcellular location is the plastid. It is found in the chloroplast. In terms of biological role, may only reduce GSH-thiol disulfides, but not protein disulfides. The sequence is that of Monothiol glutaredoxin-S7, chloroplastic (GRXS7) from Oryza sativa subsp. japonica (Rice).